The sequence spans 406 residues: Tryptophan synthase beta chain (406 aa).

The residue at position 99 (Lys-99) is an N6-(pyridoxal phosphate)lysine.

This sequence belongs to the TrpB family. In terms of assembly, tetramer of two alpha and two beta chains. The cofactor is pyridoxal 5'-phosphate.

The catalysed reaction is (1S,2R)-1-C-(indol-3-yl)glycerol 3-phosphate + L-serine = D-glyceraldehyde 3-phosphate + L-tryptophan + H2O. It participates in amino-acid biosynthesis; L-tryptophan biosynthesis; L-tryptophan from chorismate: step 5/5. Functionally, the beta subunit is responsible for the synthesis of L-tryptophan from indole and L-serine. This is Tryptophan synthase beta chain from Brucella anthropi (strain ATCC 49188 / DSM 6882 / CCUG 24695 / JCM 21032 / LMG 3331 / NBRC 15819 / NCTC 12168 / Alc 37) (Ochrobactrum anthropi).